The chain runs to 1469 residues: WASH complex subunit 2 (1469 aa).

Serine 136 is modified (phosphoserine). Disordered regions lie at residues 178–349 (YDSK…RMPV) and 367–546 (KVQS…RVAG). The span at 197 to 206 (SDEKEPETKK) shows a compositional bias: basic and acidic residues. Residue serine 227 is modified to Phosphoserine. 2 stretches are compositionally biased toward low complexity: residues 276-293 (SPPS…TSSP) and 306-316 (STASLSSSSSS). The LFa 1 motif lies at 351–372 (LFNEDEFKSFMSEIVDKVQSKT). Polar residues predominate over residues 370-385 (SKTPSSSVSPATTIST). The span at 387–399 (EPPKTKKPVEEYP) shows a compositional bias: basic and acidic residues. A phosphoserine mark is found at serine 422 and serine 426. The segment covering 519–528 (FDDDDLDIDD) has biased composition (acidic residues). The LFa 5 signature appears at 550-563 (LFEDDDQDDVTDLF). The segment at 571–591 (IPKETSSGVSPNKNVETPVAS) is disordered. A compositionally biased stretch (polar residues) spans 574–585 (ETSSGVSPNKNV). A Phosphoserine modification is found at serine 580. A Phosphothreonine modification is found at threonine 587. An LFa 6 motif is present at residues 595–605 (LFDDIEDEDLF). Disordered stretches follow at residues 607–760 (TPKA…TDLF), 933–1254 (ALPN…KLFS), and 1316–1469 (VTTA…LDFK). 2 stretches are compositionally biased toward basic and acidic residues: residues 626–649 (GEDK…EKQH) and 671–687 (TEQK…KDDT). The residue at position 693 (threonine 693) is a Phosphothreonine. The short motif at 698 to 709 (LFSEDLTDDELF) is the LFa 8 element. Polar residues-rich tracts occupy residues 709-728 (FSST…TNEF), 735-745 (YTSQTEENVSP), and 938-956 (PSAT…SVSS). 3 stretches are compositionally biased toward basic and acidic residues: residues 971–990 (DNDH…KDEL), 1031–1042 (ETDRSEVKETPE), and 1077–1089 (RKQE…RDEP). Over residues 1091-1109 (ATVQTEAEAPSSGQNTVSS) the composition is skewed to polar residues. The span at 1118–1136 (NKSRARGPAKRRPSTRRGR) shows a compositional bias: basic residues. Over residues 1159–1170 (DSPEVEHSERSS) the composition is skewed to basic and acidic residues. 7 positions are modified to phosphoserine: serine 1241, serine 1245, serine 1254, serine 1344, serine 1380, serine 1381, and serine 1408. Low complexity-rich tracts occupy residues 1417–1426 (FGGSSTSKAA) and 1434–1452 (AART…PTAT).

Belongs to the FAM21 family. In terms of assembly, component of the WASH complex.

Acts at least in part as component of the WASH complex which may regulate wash nucleation-promoting factor (NPF) activity and is required for its membrane targeting during endosomal sorting. The polypeptide is WASH complex subunit 2 (Drosophila melanogaster (Fruit fly)).